Reading from the N-terminus, the 431-residue chain is Phosphomethylpyrimidine synthase (431 aa).

Substrate contacts are provided by residues asparagine 66, methionine 95, tyrosine 124, histidine 163, 185-187, 226-229, and glutamate 265; these read SRG and DGLR. Histidine 269 contacts Zn(2+). Position 292 (tyrosine 292) interacts with substrate. A Zn(2+)-binding site is contributed by histidine 333. Residues cysteine 408, cysteine 411, and cysteine 415 each contribute to the [4Fe-4S] cluster site.

The protein belongs to the ThiC family. It depends on [4Fe-4S] cluster as a cofactor.

The enzyme catalyses 5-amino-1-(5-phospho-beta-D-ribosyl)imidazole + S-adenosyl-L-methionine = 4-amino-2-methyl-5-(phosphooxymethyl)pyrimidine + CO + 5'-deoxyadenosine + formate + L-methionine + 3 H(+). It functions in the pathway cofactor biosynthesis; thiamine diphosphate biosynthesis. Catalyzes the synthesis of the hydroxymethylpyrimidine phosphate (HMP-P) moiety of thiamine from aminoimidazole ribotide (AIR) in a radical S-adenosyl-L-methionine (SAM)-dependent reaction. The polypeptide is Phosphomethylpyrimidine synthase (Dehalococcoides mccartyi (strain ATCC BAA-2100 / JCM 16839 / KCTC 5957 / BAV1)).